The following is a 667-amino-acid chain: Flavin-dependent halogenase malA (667 aa).

4 residues coordinate FAD: His-48, Glu-70, Ile-79, and Ser-82. The active site involves Lys-108. The FAD site is built by Arg-144, Val-168, Asp-399, and Ile-412. Glu-494 lines the substrate pocket. Positions 597, 600, 613, and 616 each coordinate Zn(2+). Residues Thr-621 to Asn-646 form a flexible region region.

The protein belongs to the flavin-dependent halogenase family. Zn(2+) is required as a cofactor.

It carries out the reaction (+)-premalbrancheamide + 2 FAD + 2 chloride + 4 H(+) = (+)-malbrancheamide + 2 FADH2. The enzyme catalyses (+)-premalbrancheamide + FAD + chloride + 2 H(+) = (+)-malbrancheamide B + FADH2. It catalyses the reaction (+)-premalbrancheamide + FAD + chloride + 2 H(+) = (+)-isomalbrancheamide B + FADH2. The catalysed reaction is (+)-malbrancheamide B + FAD + chloride + 2 H(+) = (+)-malbrancheamide + FADH2. It carries out the reaction (+)-isomalbrancheamide B + FAD + chloride + 2 H(+) = (+)-malbrancheamide + FADH2. The enzyme catalyses (+)-premalbrancheamide + bromide + FAD + 2 H(+) = (+)-malbrancheamide C + FADH2. It catalyses the reaction (+)-premalbrancheamide + bromide + FAD + 2 H(+) = (+)-isomalbrancheamide C + FADH2. The catalysed reaction is (+)-malbrancheamide B + bromide + FAD + 2 H(+) = (+)-malbrancheamide D + FADH2. It carries out the reaction (+)-isomalbrancheamide B + bromide + FAD + 2 H(+) = (+)-isomalbrancheamide D + FADH2. It participates in alkaloid biosynthesis. Functionally, flavin-dependent halogenase; part of the gene cluster that mediates the biosynthesis of malbrancheamide, a dichlorinated fungal indole alkaloid that belongs to a family of natural products containing a characteristic bicyclo[2.2.2]diazaoctane core. The first step of malbrancheamide biosynthesis involves coupling of L-proline and L-tryptophan by malG, a bimodular NRPS, to produce L-Pro-L-Trp aldehyde through reductive offloading. This compound undergoes spontaneous cyclization and dehydration to give a dienamine which is reverse prenylated at C-2 by malE. The other prenyltransferase present in the cluster, malB, displays modest activity, suggesting that may be a redundant gene in the pathway. Subsequently, a [4+2] Diels-Alder cyclo-addition catalyzed by the bifunctional enzyme malC forms the characteristic bicyclo[2.2.2]diazaoctane ring of premalbrancheamid. Finally, the flavin-dependent halogenase malA catalyzes the iterative dichlorination of the indole ring of premalbrancheamide to yield C-9 monochlorinated malbrancheamide B, C-8 monochlorinated isomalbrancheamide B, and dichlorinated malbrancheamide. MalA is also able to brominate premalbrancheamide at C-9 to yield malbrancheamide C, and, to a lesser extend, at C-8 to yield isomalbrancheamide C. Finally, malA can brominate C-9 monochlorinated malbrancheamide B at C-8 to yield malbrancheamide D, or C-8 monochlorinated isomalbrancheamide B at C-9 to produce isomalbrancheamide D. This chain is Flavin-dependent halogenase malA, found in Malbranchea aurantiaca.